A 170-amino-acid polypeptide reads, in one-letter code: Small ribosomal subunit protein uS3mB (170 aa).

Residues 1–30 constitute a mitochondrion transit peptide; it reads MAAPVMSAFGRLQGLIRTERSLLTHVQSRC.

The protein belongs to the universal ribosomal protein uS3 family. In terms of assembly, component of the mitochondrial ribosome small subunit (28S) which comprises a 12S rRNA and about 30 distinct proteins.

Its subcellular location is the mitochondrion. This is Small ribosomal subunit protein uS3mB (mrps24-b) from Xenopus laevis (African clawed frog).